A 628-amino-acid polypeptide reads, in one-letter code: Probable alpha-L-arabinofuranosidase A (628 aa).

A signal peptide spans 1-25 (MVAFSALSGVSALSLLLCLVQHAHG). 8 N-linked (GlcNAc...) asparagine glycosylation sites follow: Asn-36, Asn-51, Asn-74, Asn-152, Asn-171, Asn-260, Asn-359, and Asn-493.

Belongs to the glycosyl hydrolase 51 family.

Its subcellular location is the secreted. The enzyme catalyses Hydrolysis of terminal non-reducing alpha-L-arabinofuranoside residues in alpha-L-arabinosides.. It participates in glycan metabolism; L-arabinan degradation. Alpha-L-arabinofuranosidase involved in the degradation of arabinoxylan, a major component of plant hemicellulose. Acts only on small linear 1,5-alpha-linked L-arabinofuranosyl oligosaccharides. The sequence is that of Probable alpha-L-arabinofuranosidase A (abfA) from Aspergillus awamori (Black koji mold).